Reading from the N-terminus, the 207-residue chain is MARCKS-related protein 1-B (207 aa).

Composition is skewed to low complexity over residues 1 to 25 (MGSQ…AAVK) and 63 to 77 (AGAG…AAEG). A disordered region spans residues 1 to 207 (MGSQASKGGV…STPAPSEQKE (207 aa)). Gly2 is lipidated: N-myristoyl glycine. Residues 78–90 (EAAKPEGEATKET) show a composition bias toward basic and acidic residues. The tract at residues 93–116 (KKKKKFSLKNSFKFKGISLKKSKK) is effector domain involved in lipid-binding. The segment covering 100-109 (LKNSFKFKGI) has biased composition (low complexity). Composition is skewed to basic and acidic residues over residues 131–154 (TEEK…KAEE) and 163–182 (PKAE…KEEA). Residues 195-207 (ETNSTPAPSEQKE) show a composition bias toward polar residues.

Belongs to the MARCKS family. Strongly expressed in brain and eye. Also detected at lower levels in muscle.

The protein resides in the cytoplasm. Its subcellular location is the cytoskeleton. It localises to the cell membrane. Functionally, involved in the control of cell movement by regulating actin cytoskeleton homeostasis and filopodium and lamellipodium formation. The sequence is that of MARCKS-related protein 1-B from Danio rerio (Zebrafish).